The sequence spans 450 residues: Phosphoglucosamine mutase (450 aa).

Serine 101 functions as the Phosphoserine intermediate in the catalytic mechanism. 4 residues coordinate Mg(2+): serine 101, aspartate 243, aspartate 245, and aspartate 247. Position 101 is a phosphoserine (serine 101).

It belongs to the phosphohexose mutase family. It depends on Mg(2+) as a cofactor. Post-translationally, activated by phosphorylation.

The enzyme catalyses alpha-D-glucosamine 1-phosphate = D-glucosamine 6-phosphate. Catalyzes the conversion of glucosamine-6-phosphate to glucosamine-1-phosphate. The protein is Phosphoglucosamine mutase of Desulfotalea psychrophila (strain LSv54 / DSM 12343).